A 430-amino-acid polypeptide reads, in one-letter code: Asparagine--tRNA ligase (430 aa).

Belongs to the class-II aminoacyl-tRNA synthetase family. In terms of assembly, homodimer.

It is found in the cytoplasm. The enzyme catalyses tRNA(Asn) + L-asparagine + ATP = L-asparaginyl-tRNA(Asn) + AMP + diphosphate + H(+). This chain is Asparagine--tRNA ligase, found in Staphylococcus aureus (strain JH1).